A 196-amino-acid polypeptide reads, in one-letter code: Protein hunchback (196 aa).

Disordered regions lie at residues Ser16–Asn56, Leu63–Met82, and Leu156–Ala196. The segment covering His17–His29 has biased composition (basic residues). Low complexity-rich tracts occupy residues Ser33–Gln43 and Gln65–Gln80. Residues Glu177–Ala196 are compositionally biased toward basic and acidic residues.

Belongs to the hunchback C2H2-type zinc-finger protein family.

It localises to the nucleus. Its function is as follows. Gap class segmentation protein that controls development of head structures. In Drosophila adunca (Fruit fly), this protein is Protein hunchback (hb).